Here is a 221-residue protein sequence, read N- to C-terminus: Leucine rich adaptor protein 1-like (221 aa).

Methionine 1 carries the post-translational modification N-acetylmethionine. The interval 1–81 (MEDGPLPDLR…SGSPRRSHPS (81 aa)) is disordered. Composition is skewed to basic and acidic residues over residues 8–21 (DLRD…RKVP) and 28–39 (LRGEEPAPREGA). The segment covering 48 to 75 (SCSSSSSCSSFAPSVSSSSSSSPASGSP) has biased composition (low complexity).

This chain is Leucine rich adaptor protein 1-like (Lurap1l), found in Rattus norvegicus (Rat).